The sequence spans 313 residues: MLDNVLRIATRQSPLALWQAHYVKDKLMASHPGLVVELVPMVTRGDVILDTPLAKVGGKGLFVKELEVALLENRADIAVHSMKDVPVEFPQGLGLVTICEREDPRDAFVSNNYDSLDALPAGSIVGTSSLRRQCQLAERRPDLIIRSLRGNVGTRLSKLDNGEYDAIILAVAGLKRLGLESRIRAALPPEISLPAVGQGAVGIECRLDDSRTRELLAALNHHETALRVTAERAMNTRLEGGCQVPIGSYAELIDGEIWLRALVGAPDGSQIIRGERRGAPQDAEQMGISLAEELLNNGAREILAEVYNGDAPA.

Cysteine 242 carries the S-(dipyrrolylmethanemethyl)cysteine modification.

The protein belongs to the HMBS family. Monomer. The cofactor is dipyrromethane.

It carries out the reaction 4 porphobilinogen + H2O = hydroxymethylbilane + 4 NH4(+). The protein operates within porphyrin-containing compound metabolism; protoporphyrin-IX biosynthesis; coproporphyrinogen-III from 5-aminolevulinate: step 2/4. In terms of biological role, tetrapolymerization of the monopyrrole PBG into the hydroxymethylbilane pre-uroporphyrinogen in several discrete steps. This chain is Porphobilinogen deaminase, found in Escherichia coli (strain K12 / MC4100 / BW2952).